The primary structure comprises 228 residues: PKHD-type hydroxylase XAC2942 (228 aa).

Positions R78–S180 constitute a Fe2OG dioxygenase domain. Residues H96, D98, and H161 each contribute to the Fe cation site. R171 is a binding site for 2-oxoglutarate.

Requires Fe(2+) as cofactor. L-ascorbate serves as cofactor.

This is PKHD-type hydroxylase XAC2942 from Xanthomonas axonopodis pv. citri (strain 306).